The chain runs to 130 residues: Large ribosomal subunit protein bL31c (130 aa).

Residues 1–36 (MVLTLSNQFLAKIPATPKTLTLPKTSSSTLRPQWSC) constitute a chloroplast transit peptide.

The protein belongs to the bacterial ribosomal protein bL31 family. Type A subfamily. Component of the chloroplast large ribosomal subunit (LSU). Mature 70S chloroplast ribosomes of higher plants consist of a small (30S) and a large (50S) subunit. The 30S small subunit contains 1 molecule of ribosomal RNA (16S rRNA) and 24 different proteins. The 50S large subunit contains 3 rRNA molecules (23S, 5S and 4.5S rRNA) and 33 different proteins.

The protein localises to the plastid. The protein resides in the chloroplast. Component of the chloroplast ribosome (chloro-ribosome), a dedicated translation machinery responsible for the synthesis of chloroplast genome-encoded proteins, including proteins of the transcription and translation machinery and components of the photosynthetic apparatus. The protein is Large ribosomal subunit protein bL31c (RPL31) of Spinacia oleracea (Spinach).